A 457-amino-acid polypeptide reads, in one-letter code: Interferon regulatory factor 7 (457 aa).

Positions 9-126 (RVLFGDWLLG…DPHKVYELSR (118 aa)) form a DNA-binding region, IRF tryptophan pentad repeat. Lysine 92 is modified (N6-acetyllysine; by KAT2A and KAT2B). The necessary for the interaction with NMI stretch occupies residues 238–410 (RSLGFLDVTI…TLILVKLEPW (173 aa)). Lysine 329 participates in a covalent cross-link: Glycyl lysine isopeptide (Lys-Gly) (interchain with G-Cter in ubiquitin). Glycyl lysine isopeptide (Lys-Gly) (interchain with G-Cter in SUMO) cross-links involve residues lysine 398 and lysine 400. A phosphoserine mark is found at serine 425, serine 426, and serine 429. Phosphoserine; by TBK1 and IKKE is present on serine 431. A phosphoserine mark is found at serine 437, serine 438, and serine 441.

It belongs to the IRF family. As to quaternary structure, monomer. Homodimer; phosphorylation-induced. Heterodimer with IRF3. Interacts with TICAM1 and TICAM2. Interacts with MYD88 and TRAF6. Interacts with NMI; the interaction is direct and leads to the inhibition of IRF7-mediated type I IFN production. Interacts with GBP4; preventing interaction between TRAF6 and IRF7, resulting in impaired TRAF6-mediated IRF7 ubiquitination. Interacts with TARBP2; this interaction prevents IRF7 phosphorylation and activation. In terms of processing, acetylation inhibits its DNA-binding ability and activity. In response to a viral infection, phosphorylated by TBK1 and IKBKE1. Phosphorylation, and subsequent activation is inhibited by vaccinia virus protein E3. In TLR7- and TLR9-mediated signaling pathway, phosphorylated by IRAK1. Post-translationally, TRAF6-mediated ubiquitination is required for IRF7 activation. TRIM35 mediates IRF7 'Lys-48'-linked polyubiquitination and subsequent proteasomal degradation. 'Lys-48'-linked polyubiquitination and subsequent proteasomal degradation is NMI-dependent in response to Sendai virus infection. Ubiquitinated by UBE3C, leading to its degradation. In terms of processing, sumoylated by TRIM28, which inhibits its transactivation activity. 'Lys-63'-linked ubiquitination by NEURL3 promotes IRF7 activation.

It localises to the nucleus. The protein localises to the cytoplasm. Its activity is regulated as follows. In the absence of viral infection, maintained as a monomer in an autoinhibited state and phosphorylation disrupts this autoinhibition leading to the liberation of the DNA-binding and dimerization activities and its nuclear localization where it can activate type I IFN and ISG genes. Key transcriptional regulator of type I interferon (IFN)-dependent immune responses and plays a critical role in the innate immune response against DNA and RNA viruses. Regulates the transcription of type I IFN genes (IFN-alpha and IFN-beta) and IFN-stimulated genes (ISG) by binding to an interferon-stimulated response element (ISRE) in their promoters. Can efficiently activate both the IFN-beta (IFNB) and the IFN-alpha (IFNA) genes and mediate their induction via both the virus-activated, MyD88-independent pathway and the TLR-activated, MyD88-dependent pathway. Induces transcription of ubiquitin hydrolase USP25 mRNA in response to lipopolysaccharide (LPS) or viral infection in a type I IFN-dependent manner. Required during both the early and late phases of the IFN gene induction but is more critical for the late than for the early phase. Exists in an inactive form in the cytoplasm of uninfected cells and following viral infection, double-stranded RNA (dsRNA), or toll-like receptor (TLR) signaling, becomes phosphorylated by IKBKE and TBK1 kinases. This induces a conformational change, leading to its dimerization and nuclear localization where along with other coactivators it can activate transcription of the type I IFN and ISG genes. Can also play a role in regulating adaptive immune responses by inducing PSMB9/LMP2 expression, either directly or through induction of IRF1. Binds to the Q promoter (Qp) of EBV nuclear antigen 1 a (EBNA1) and may play a role in the regulation of EBV latency. Can activate distinct gene expression programs in macrophages and regulate the anti-tumor properties of primary macrophages. This Mus musculus (Mouse) protein is Interferon regulatory factor 7 (Irf7).